A 62-amino-acid chain; its full sequence is Small ribosomal subunit protein eS27 (62 aa).

Positions 17, 20, 36, and 39 each coordinate Zn(2+). The segment at 17 to 39 adopts a C4-type zinc-finger fold; the sequence is CNDCENEQIIFGSASRKITCVVC.

This sequence belongs to the eukaryotic ribosomal protein eS27 family. In terms of assembly, part of the 30S ribosomal subunit. It depends on Zn(2+) as a cofactor.

In Methanosarcina barkeri (strain Fusaro / DSM 804), this protein is Small ribosomal subunit protein eS27.